Here is a 624-residue protein sequence, read N- to C-terminus: Polygalacturonase 1 beta-like protein 2 (624 aa).

Positions 1–26 (MNNIEATLFLCFFCIFSSSNVHFAGA) are cleaved as a signal peptide. An FXXY 1 repeat occupies 121–124 (FAAY). Residue N128 is glycosylated (N-linked (GlcNAc...) asparagine). 11 FXXY repeats span residues 129 to 132 (FTNY), 143 to 146 (FKNY), 157 to 160 (FRRY), 171 to 174 (FTNY), 185 to 188 (FTTY), 199 to 202 (FTNY), 213 to 216 (FTSY), 227 to 230 (FTTY), 241 to 244 (FTSY), 255 to 258 (FSGY), and 269 to 272 (FTKY). N-linked (GlcNAc...) asparagine glycosylation occurs at N145. Positions 199-219 (FTNYNTDANEPNGRFTSYSDK) are disordered. Residue N280 is glycosylated (N-linked (GlcNAc...) asparagine). 5 FXXY repeats span residues 283 to 286 (FTSY), 297 to 300 (FKGY), 311 to 314 (FKNY), 325 to 328 (FSSY), and 339 to 342 (FVNY). A glycan (N-linked (GlcNAc...) asparagine) is linked at N352. The stretch at 353-356 (FTGY) is one FXXY 18 repeat. Residue N364 is glycosylated (N-linked (GlcNAc...) asparagine). FXXY repeat units lie at residues 367-370 (FKTY), 376-379 (FKVY), and 386-389 (FARY). 2 N-linked (GlcNAc...) asparagine glycosylation sites follow: N392 and N463. Residues 409-623 (FFREAMLKEG…FENDMTWNII (215 aa)) form the BURP domain.

In terms of tissue distribution, expressed in flowers and stems.

It localises to the secreted. It is found in the extracellular space. The protein localises to the apoplast. The protein resides in the cell wall. In terms of biological role, involved in cell size determination. This Arabidopsis thaliana (Mouse-ear cress) protein is Polygalacturonase 1 beta-like protein 2.